Reading from the N-terminus, the 234-residue chain is Phosphoribosylaminoimidazole-succinocarboxamide synthase (234 aa).

Belongs to the SAICAR synthetase family.

The catalysed reaction is 5-amino-1-(5-phospho-D-ribosyl)imidazole-4-carboxylate + L-aspartate + ATP = (2S)-2-[5-amino-1-(5-phospho-beta-D-ribosyl)imidazole-4-carboxamido]succinate + ADP + phosphate + 2 H(+). Its pathway is purine metabolism; IMP biosynthesis via de novo pathway; 5-amino-1-(5-phospho-D-ribosyl)imidazole-4-carboxamide from 5-amino-1-(5-phospho-D-ribosyl)imidazole-4-carboxylate: step 1/2. The polypeptide is Phosphoribosylaminoimidazole-succinocarboxamide synthase (Staphylococcus aureus (strain COL)).